Reading from the N-terminus, the 361-residue chain is Gibberellin 20 oxidase 1-D (361 aa).

The Fe2OG dioxygenase domain maps to 199–299 (GNDSIMRLNY…RKSLAFFLCP (101 aa)). Fe cation is bound by residues His-224, Asp-226, and His-280. The active site involves Arg-290.

The protein belongs to the iron/ascorbate-dependent oxidoreductase family. GA20OX subfamily. It depends on Fe cation as a cofactor. L-ascorbate is required as a cofactor. Expressed in nodes and the ear of the elongating stem.

The enzyme catalyses gibberellin A12 + 2 2-oxoglutarate + 3 O2 + H(+) = gibberellin A9 + 2 succinate + 3 CO2 + 2 H2O. It catalyses the reaction gibberellin A53 + 2 2-oxoglutarate + 3 O2 + H(+) = gibberellin A20 + 2 succinate + 3 CO2 + 2 H2O. Key oxidase enzyme in the biosynthesis of gibberellin that catalyzes the conversion of GA12 and GA53 to GA9 and GA20 respectively, via a three-step oxidation at C-20 of the GA skeleton. This is Gibberellin 20 oxidase 1-D (GA20ox1D) from Triticum aestivum (Wheat).